The chain runs to 364 residues: UDP-N-acetylglucosamine--N-acetylmuramyl-(pentapeptide) pyrophosphoryl-undecaprenol N-acetylglucosamine transferase (364 aa).

UDP-N-acetyl-alpha-D-glucosamine is bound by residues 15–17, asparagine 123, arginine 164, serine 191, and glutamine 286; that span reads TGG.

It belongs to the glycosyltransferase 28 family. MurG subfamily.

It localises to the cell inner membrane. It carries out the reaction di-trans,octa-cis-undecaprenyl diphospho-N-acetyl-alpha-D-muramoyl-L-alanyl-D-glutamyl-meso-2,6-diaminopimeloyl-D-alanyl-D-alanine + UDP-N-acetyl-alpha-D-glucosamine = di-trans,octa-cis-undecaprenyl diphospho-[N-acetyl-alpha-D-glucosaminyl-(1-&gt;4)]-N-acetyl-alpha-D-muramoyl-L-alanyl-D-glutamyl-meso-2,6-diaminopimeloyl-D-alanyl-D-alanine + UDP + H(+). Its pathway is cell wall biogenesis; peptidoglycan biosynthesis. In terms of biological role, cell wall formation. Catalyzes the transfer of a GlcNAc subunit on undecaprenyl-pyrophosphoryl-MurNAc-pentapeptide (lipid intermediate I) to form undecaprenyl-pyrophosphoryl-MurNAc-(pentapeptide)GlcNAc (lipid intermediate II). The protein is UDP-N-acetylglucosamine--N-acetylmuramyl-(pentapeptide) pyrophosphoryl-undecaprenol N-acetylglucosamine transferase of Prochlorococcus marinus subsp. pastoris (strain CCMP1986 / NIES-2087 / MED4).